The following is a 623-amino-acid chain: Kelch repeat and BTB domain-containing protein 12 (623 aa).

A BTB domain is found at 31 to 98; that stretch reads IDVVLTAEGE…MYNAALEINN (68 aa). The BACK domain occupies 133-235; that stretch reads CLGIYYFAKQ…NPSFLRQALR (103 aa). Kelch repeat units lie at residues 386–436, 437–492, 494–547, and 553–603; these read DLYV…TVNN, KLYV…VVNS, IYVL…STNA, and KLYV…LVAR.

This Homo sapiens (Human) protein is Kelch repeat and BTB domain-containing protein 12 (KBTBD12).